Here is a 136-residue protein sequence, read N- to C-terminus: Ribonuclease P protein component (136 aa).

This sequence belongs to the RnpA family. As to quaternary structure, consists of a catalytic RNA component (M1 or rnpB) and a protein subunit.

The enzyme catalyses Endonucleolytic cleavage of RNA, removing 5'-extranucleotides from tRNA precursor.. Its function is as follows. RNaseP catalyzes the removal of the 5'-leader sequence from pre-tRNA to produce the mature 5'-terminus. It can also cleave other RNA substrates such as 4.5S RNA. The protein component plays an auxiliary but essential role in vivo by binding to the 5'-leader sequence and broadening the substrate specificity of the ribozyme. This is Ribonuclease P protein component from Burkholderia pseudomallei (strain 1106a).